The chain runs to 319 residues: Transcription elongation factor A protein 1 (319 aa).

Positions 1–78 constitute a TFIIS N-terminal domain; it reads MQEIIKCREQ…DKWKQDIEGT (78 aa). Over residues 78-106 the composition is skewed to low complexity; it reads TSATTTSSSSSSSSSTTSTTTTKTASPSE. Residues 78–146 form a disordered region; sequence TSATTTSSSS…TTPKTSSPPI (69 aa). Residues 107 to 122 show a composition bias toward basic and acidic residues; that stretch reads SLKRKSISEDTSDRPT. Over residues 133–146 the composition is skewed to low complexity; sequence ISPPTTPKTSSPPI. Positions 160-272 constitute a TFIIS central domain; the sequence is LRNKTIQLFV…ASMLGQNNEA (113 aa). The TFIIS-type zinc finger occupies 275–317; it reads DQFQCGKCKQRKCTYTQLQTRSADEPPTTFVKCCVKGCGNRWR. Zn(2+) contacts are provided by Cys279, Cys282, Cys307, and Cys312.

The protein belongs to the TFS-II family.

It is found in the nucleus. Necessary for efficient RNA polymerase II transcription elongation past template-encoded arresting sites. The arresting sites in DNA have the property of trapping a certain fraction of elongating RNA polymerases that pass through, resulting in locked ternary complexes. Cleavage of the nascent transcript by S-II allows the resumption of elongation from the new 3'-terminus. The sequence is that of Transcription elongation factor A protein 1 (tcea1) from Dictyostelium discoideum (Social amoeba).